A 179-amino-acid chain; its full sequence is Large ribosomal subunit protein uL5 (179 aa).

Belongs to the universal ribosomal protein uL5 family. Part of the 50S ribosomal subunit; part of the 5S rRNA/L5/L18/L25 subcomplex. Contacts the 5S rRNA and the P site tRNA. Forms a bridge to the 30S subunit in the 70S ribosome.

Functionally, this is one of the proteins that bind and probably mediate the attachment of the 5S RNA into the large ribosomal subunit, where it forms part of the central protuberance. In the 70S ribosome it contacts protein S13 of the 30S subunit (bridge B1b), connecting the 2 subunits; this bridge is implicated in subunit movement. Contacts the P site tRNA; the 5S rRNA and some of its associated proteins might help stabilize positioning of ribosome-bound tRNAs. In Buchnera aphidicola subsp. Acyrthosiphon pisum (strain APS) (Acyrthosiphon pisum symbiotic bacterium), this protein is Large ribosomal subunit protein uL5.